The chain runs to 105 residues: Thiosulfate sulfurtransferase GlpE (105 aa).

The Rhodanese domain occupies 15-103 (MQQGAILVDI…WCRAELPIDT (89 aa)). Catalysis depends on C63, which acts as the Cysteine persulfide intermediate.

It belongs to the GlpE family.

It is found in the cytoplasm. The enzyme catalyses thiosulfate + hydrogen cyanide = thiocyanate + sulfite + 2 H(+). It catalyses the reaction thiosulfate + [thioredoxin]-dithiol = [thioredoxin]-disulfide + hydrogen sulfide + sulfite + 2 H(+). Its function is as follows. Transferase that catalyzes the transfer of sulfur from thiosulfate to thiophilic acceptors such as cyanide or dithiols. May function in a CysM-independent thiosulfate assimilation pathway by catalyzing the conversion of thiosulfate to sulfite, which can then be used for L-cysteine biosynthesis. The chain is Thiosulfate sulfurtransferase GlpE from Haemophilus influenzae (strain PittEE).